An 848-amino-acid chain; its full sequence is MWLRLGPPSLSLSPKPTVGRSLCLTLWFLSLALRASTQAPAPTVNTHFGKLRGARVPLPSEILGPVDQYLGVPYAAPPIGEKRFLPPEPPPSWSGIRNATHFPPVCPQNIHTAVPEVMLPVWFTANLDIVATYIQEPNEDCLYLNVYVPTEDVKRISKECARKPNKKICRKGGSGAKKQGEDLADNDGDEDEDIRDSGAKPVMVYIHGGSYMEGTGNMIDGSILASYGNVIVITLNYRVGVLGFLSTGDQAAKGNYGLLDQIQALRWVSENIAFFGGDPRRITVFGSGIGASCVSLLTLSHHSEGLFQRAIIQSGSALSSWAVNYQPVKYTSLLADKVGCNVLDTVDMVDCLRQKSAKELVEQDIQPARYHVAFGPVIDGDVIPDDPEILMEQGEFLNYDIMLGVNQGEGLKFVEGVVDPEDGVSGTDFDYSVSNFVDNLYGYPEGKDTLRETIKFMYTDWADRDNPETRRKTLVALFTDHQWVEPSVVTADLHARYGSPTYFYAFYHHCQSLMKPAWSDAAHGDEVPYVFGVPMVGPTDLFPCNFSKNDVMLSAVVMTYWTNFAKTGDPNKPVPQDTKFIHTKANRFEEVAWSKYNPRDQLYLHIGLKPRVRDHYRATKVAFWKHLVPHLYNLHDMFHYTSTTTKVPPPDTTHSSHITRRPNGKTWSTKRPAISPAYSNENAQGSWNGDQDAGPLLVENPRDYSTELSVTIAVGASLLFLNVLAFAALYYRKDKRRQEPLRQPSPQRGAGAPELGAAPEEELAALQLGPTHHECEAGPPHDTLRLTALPDYTLTLRRSPDDIPLMTPNTITMIPNSLVGLQTLHPYNTFAAGFNSTGLPHSHSTTRV.

An N-terminal signal peptide occupies residues 1–37 (MWLRLGPPSLSLSPKPTVGRSLCLTLWFLSLALRAST). At 38–709 (QAPAPTVNTH…NPRDYSTELS (672 aa)) the chain is on the extracellular side. N-linked (GlcNAc...) asparagine glycosylation occurs at asparagine 98. Cysteine 106 and cysteine 141 are oxidised to a cystine. Residues 170 to 195 (RKGGSGAKKQGEDLADNDGDEDEDIR) are disordered. The segment covering 182–194 (DLADNDGDEDEDI) has biased composition (acidic residues). 2 disulfides stabilise this stretch: cysteine 340–cysteine 351 and cysteine 510–cysteine 544. An N-linked (GlcNAc...) asparagine glycan is attached at asparagine 545. Polar residues-rich tracts occupy residues 645–656 (TKVPPPDTTHSS) and 677–689 (AYSN…SWNG). Positions 645–694 (TKVPPPDTTHSSHITRRPNGKTWSTKRPAISPAYSNENAQGSWNGDQDAG) are disordered. Residues 710–730 (VTIAVGASLLFLNVLAFAALY) traverse the membrane as a helical segment. Residues 731 to 848 (YRKDKRRQEP…LPHSHSTTRV (118 aa)) lie on the Cytoplasmic side of the membrane. Serine 745 bears the Phosphoserine mark. Residue tyrosine 792 is modified to Phosphotyrosine.

It belongs to the type-B carboxylesterase/lipase family. In terms of assembly, homodimer, and heterodimer with NLGN1 and NLGN2. Interacts with neurexins NRXN1, NRXN2 and NRXN3. Interaction with neurexins is mediated by heparan sulfate glycan modification on neurexin. Interacts (via its C-terminus) with DLG4/PSD-95 (via PDZ domain 3). Expressed in the blood vessel walls (at protein level). Detected in throughout the brain and in spinal cord. Detected in brain, and at lower levels in pancreas islet beta cells.

The protein resides in the cell membrane. The protein localises to the synapse. Its function is as follows. Cell surface protein involved in cell-cell-interactions via its interactions with neurexin family members. Plays a role in synapse function and synaptic signal transmission, and may mediate its effects by clustering other synaptic proteins. May promote the initial formation of synapses, but is not essential for this. May also play a role in glia-glia or glia-neuron interactions in the developing peripheral nervous system. This Homo sapiens (Human) protein is Neuroligin-3 (NLGN3).